The following is a 474-amino-acid chain: Protein NAR1 (474 aa).

Residues C24, C61, C64, C67, C177, C233, C390, and C394 each coordinate [4Fe-4S] cluster.

The protein belongs to the NARF family. In terms of assembly, part of a complex composed of AE7, CIA1, MMS19 and NAR1. Interacts with CIA1. Expressed in developing tissues, including shoot apex, young leaves, vascular tissues, root tips, pedicels, carpels and developing seeds.

The protein resides in the nucleus. It is found in the cytoplasm. Its function is as follows. Essential component of the cytosolic iron-sulfur (Fe-S) protein assembly (CIA) machinery. Required for the maturation of extramitochondrial Fe/S proteins. Required for expression of the imprinted FWA gene, for seed development and is involved in the oxidative stress response in vegetative tissues. Involved in the regulation of cell size, ploidy and cell cycle progression. Required for growth under normoxic conditions and necessary for recovery after hypoxic treatment but its action is reactive oxygen species (ROS) independent. The protein is Protein NAR1 of Arabidopsis thaliana (Mouse-ear cress).